Here is a 255-residue protein sequence, read N- to C-terminus: High-affinity branched-chain amino acid transport ATP-binding protein BraF (255 aa).

The region spanning 6–254 (LEVSGLTMRF…PDVIKAYLGE (249 aa)) is the ABC transporter domain. 38–45 (GPNGAGKT) is a binding site for ATP.

This sequence belongs to the ABC transporter superfamily.

The protein localises to the cell inner membrane. Its function is as follows. Component of the high affinity leucine, isoleucine, valine, transport system (LIV-I), which is operative without Na(+) and is specific for alanine and threonine, in addition to branched-chain amino acids. This Pseudomonas aeruginosa (strain ATCC 15692 / DSM 22644 / CIP 104116 / JCM 14847 / LMG 12228 / 1C / PRS 101 / PAO1) protein is High-affinity branched-chain amino acid transport ATP-binding protein BraF (braF).